The following is a 149-amino-acid chain: FAD synthase (149 aa).

ATP contacts are provided by residues 9 to 10 (TF), 14 to 17 (HPGH), Asn-92, and Tyr-119.

It belongs to the archaeal FAD synthase family. As to quaternary structure, homodimer. Requires a divalent metal cation as cofactor.

It carries out the reaction FMN + ATP + H(+) = FAD + diphosphate. Its pathway is cofactor biosynthesis; FAD biosynthesis; FAD from FMN: step 1/1. Its function is as follows. Catalyzes the transfer of the AMP portion of ATP to flavin mononucleotide (FMN) to produce flavin adenine dinucleotide (FAD) coenzyme. The chain is FAD synthase from Methanoculleus marisnigri (strain ATCC 35101 / DSM 1498 / JR1).